We begin with the raw amino-acid sequence, 937 residues long: MEACCCSSSSVPSASILATGAGLRRRFSPAGAGGGGRAVAVAAGRPIRASAALLAAPAPRRRGGVVVRAVFERFTERAVKAVVFSQREARGMGDETVAPHHLLLGLVAEDRSPLGFLASGVRVERAREACRAAVGKEGLAQAPVGLATDVPFSGASKRVFEAAVEFSRNMGCNFISPEHIALGLFNLNDPTTNNVLKSLGVDSSQLAKQALTRVQGELAKDGREPVGLSSFKVREKFTPGGGKSAIVKYSNKNKEKSALALFCLDLTMRASGGLIDPVIGRKDEIERVVQIICRRTKNNPILLGEAGVGKTAIAEGLAHKIANGDVPIFLVGKRILSLDVALLMAGAKERGELEARVTSLIREVRKAGDVILFIDEVHTLIGSGIAGRGSKGAGLDIANLLKPALARGELQCIASTTLDEHRLHFDKDKALARRFQPVLVNEPSQEDAVKILLGLREKYETYHKCKYTLESINAAVYLSARYIADRHLPDKAIDLIDEAGSRARMESFKRKKEEQCSILSKSPDEYWQEIRAVQNMHEVALTNKVKYSLNQNDQEDAVDIELVGEDKTSPASMLSTSTDKPSLVGSEEIARVTSLWSGIPVQQLTADERKLLVGLDDELRKRVIGQDDAVLAISKAVKRSRVGLNDPDRPIATLIFCGPTGVGKTELTKALAASYFGSESATVRLDMSEYMERHAVSKLIGSPPGYMGFGEGGTLTEAVRRKPFTVVLLDEIEKAHPDIFNILLQIFEDGHLTDSQGRRVSFKNTLIVMTSNVGSTSISNGKRSIGFQTQTDTEEKSYAAMKSLVMEELKAFFRPELLNRIDEVVVFHPLEKTQMLAILNIMLQEVKGRILALGIGLEVSDSMKDLISQHGYDKSYGARPLRRAVTQLVEDVISEAILSGQFKPGDTIMVDTDATGKPCLSRLNDQTVQLSDPTPTL.

A chloroplast-targeting transit peptide spans 1 to 80; the sequence is MEACCCSSSS…FERFTERAVK (80 aa). 2 repeat regions span residues 81–137 and 152–217; these read AVVF…VGKE and FSGA…VQGE. One can recognise a Clp R domain in the interval 81 to 217; it reads AVVFSQREAR…KQALTRVQGE (137 aa). Residues 259-513 are i; that stretch reads LALFCLDLTM…RMESFKRKKE (255 aa). Residues 304-311 and 658-665 contribute to the ATP site; these read GEAGVGKT and GPTGVGKT. The interval 584–775 is II; that stretch reads VGSEEIARVT…LIVMTSNVGS (192 aa).

The protein belongs to the ClpA/ClpB family. ClpD subfamily. Highly expressed in stems, culms and leaves.

Its subcellular location is the plastid. The protein localises to the chloroplast. Molecular chaperone that may interact with a ClpP-like protease involved in degradation of denatured proteins in the chloroplast. The chain is Chaperone protein ClpD2, chloroplastic (CLPD2) from Oryza sativa subsp. japonica (Rice).